The chain runs to 420 residues: 3-isopropylmalate dehydratase large subunit (420 aa).

Residues Cys-300, Cys-360, and Cys-363 each coordinate [4Fe-4S] cluster.

It belongs to the aconitase/IPM isomerase family. LeuC type 2 subfamily. Heterodimer of LeuC and LeuD. Requires [4Fe-4S] cluster as cofactor.

It carries out the reaction (2R,3S)-3-isopropylmalate = (2S)-2-isopropylmalate. It participates in amino-acid biosynthesis; L-leucine biosynthesis; L-leucine from 3-methyl-2-oxobutanoate: step 2/4. Catalyzes the isomerization between 2-isopropylmalate and 3-isopropylmalate, via the formation of 2-isopropylmaleate. In Syntrophus aciditrophicus (strain SB), this protein is 3-isopropylmalate dehydratase large subunit.